Consider the following 55-residue polypeptide: Large ribosomal subunit protein bL33 (55 aa).

A compositionally biased stretch (basic and acidic residues) spans 1–11 (MAKGSREKIKL). Positions 1–32 (MAKGSREKIKLESSASTGHFYTTSKNKRTKPE) are disordered. Residues 13 to 24 (SSASTGHFYTTS) are compositionally biased toward polar residues.

Belongs to the bacterial ribosomal protein bL33 family.

The chain is Large ribosomal subunit protein bL33 from Polynucleobacter necessarius subsp. necessarius (strain STIR1).